A 485-amino-acid polypeptide reads, in one-letter code: Glutamyl-tRNA(Gln) amidotransferase subunit A (485 aa).

Residues K79 and S154 each act as charge relay system in the active site. S178 serves as the catalytic Acyl-ester intermediate.

Belongs to the amidase family. GatA subfamily. In terms of assembly, heterotrimer of A, B and C subunits.

The catalysed reaction is L-glutamyl-tRNA(Gln) + L-glutamine + ATP + H2O = L-glutaminyl-tRNA(Gln) + L-glutamate + ADP + phosphate + H(+). Its function is as follows. Allows the formation of correctly charged Gln-tRNA(Gln) through the transamidation of misacylated Glu-tRNA(Gln) in organisms which lack glutaminyl-tRNA synthetase. The reaction takes place in the presence of glutamine and ATP through an activated gamma-phospho-Glu-tRNA(Gln). The protein is Glutamyl-tRNA(Gln) amidotransferase subunit A of Desulforamulus reducens (strain ATCC BAA-1160 / DSM 100696 / MI-1) (Desulfotomaculum reducens).